The following is a 49-amino-acid chain: Fungus-induced-related protein 16 (49 aa).

In Caenorhabditis elegans, this protein is Fungus-induced-related protein 16 (fipr-16).